The following is a 281-amino-acid chain: Probable protein phosphatase 2C 9 (281 aa).

Residues Lys33–Phe280 form the PPM-type phosphatase domain. The Mn(2+) site is built by Asp70, Gly71, Asp232, and Asp271.

This sequence belongs to the PP2C family. Interacts with phytochromes (via N-terminus). Mg(2+) serves as cofactor. It depends on Mn(2+) as a cofactor.

The protein resides in the nucleus. The enzyme catalyses O-phospho-L-seryl-[protein] + H2O = L-seryl-[protein] + phosphate. It carries out the reaction O-phospho-L-threonyl-[protein] + H2O = L-threonyl-[protein] + phosphate. Its function is as follows. Involved in the regulation of phytochrome signaling. May regulate phytochrome-interacting factor 3 (PIF3) through the dephosphorylation of phytochrome. The protein is Probable protein phosphatase 2C 9 of Arabidopsis thaliana (Mouse-ear cress).